Reading from the N-terminus, the 162-residue chain is NADH-quinone oxidoreductase subunit I 1 (162 aa).

4Fe-4S ferredoxin-type domains are found at residues leucine 44–alanine 74 and tyrosine 90–glutamate 119. [4Fe-4S] cluster contacts are provided by cysteine 54, cysteine 57, cysteine 60, cysteine 64, cysteine 99, cysteine 102, cysteine 105, and cysteine 109.

The protein belongs to the complex I 23 kDa subunit family. As to quaternary structure, NDH-1 is composed of 14 different subunits. Subunits NuoA, H, J, K, L, M, N constitute the membrane sector of the complex. Requires [4Fe-4S] cluster as cofactor.

The protein localises to the cell membrane. The enzyme catalyses a quinone + NADH + 5 H(+)(in) = a quinol + NAD(+) + 4 H(+)(out). In terms of biological role, NDH-1 shuttles electrons from NADH, via FMN and iron-sulfur (Fe-S) centers, to quinones in the respiratory chain. The immediate electron acceptor for the enzyme in this species is believed to be ubiquinone. Couples the redox reaction to proton translocation (for every two electrons transferred, four hydrogen ions are translocated across the cytoplasmic membrane), and thus conserves the redox energy in a proton gradient. The polypeptide is NADH-quinone oxidoreductase subunit I 1 (Symbiobacterium thermophilum (strain DSM 24528 / JCM 14929 / IAM 14863 / T)).